A 131-amino-acid chain; its full sequence is Fumarate reductase subunit C (131 aa).

3 consecutive transmembrane segments (helical) span residues Glu30–Leu50, Phe63–His83, and Ile109–Leu129.

This sequence belongs to the FrdC family. As to quaternary structure, part of an enzyme complex containing four subunits: a flavoprotein (FrdA), an iron-sulfur protein (FrdB), and two hydrophobic anchor proteins (FrdC and FrdD).

The protein resides in the cell inner membrane. Its function is as follows. Two distinct, membrane-bound, FAD-containing enzymes are responsible for the catalysis of fumarate and succinate interconversion; fumarate reductase is used in anaerobic growth, and succinate dehydrogenase is used in aerobic growth. Anchors the catalytic components of the fumarate reductase complex to the cell inner membrane, binds quinones. This chain is Fumarate reductase subunit C, found in Shigella boydii serotype 4 (strain Sb227).